We begin with the raw amino-acid sequence, 129 residues long: Small ribosomal subunit protein uS8 (129 aa).

Belongs to the universal ribosomal protein uS8 family. As to quaternary structure, part of the 30S ribosomal subunit. Contacts proteins S5 and S12.

In terms of biological role, one of the primary rRNA binding proteins, it binds directly to 16S rRNA central domain where it helps coordinate assembly of the platform of the 30S subunit. The sequence is that of Small ribosomal subunit protein uS8 from Bdellovibrio bacteriovorus (strain ATCC 15356 / DSM 50701 / NCIMB 9529 / HD100).